The following is an 877-amino-acid chain: Putative leucine-rich repeat receptor-like serine/threonine-protein kinase At2g19230 (877 aa).

Residues 1-24 form the signal peptide; the sequence is MGNFNFLPLVSFASFVVVLVLVCA. The Extracellular portion of the chain corresponds to 25 to 517; sequence QDQSGFVSID…RNKKTERKEY (493 aa). 6 N-linked (GlcNAc...) asparagine glycosylation sites follow: N142, N233, N261, N295, N405, and N420. LRR repeat units lie at residues 439 to 462 and 463 to 484; these read PLQKLDLSNNRLTGTVPDFLANLP and DLTELNLEENKLTGILPEKLLE. A helical membrane pass occupies residues 518-538; sequence IIPSVASVTGLFFLLLALISF. At 539–877 the chain is on the cytoplasmic side; the sequence is WQFKKRQQSV…VDPGVLPQPR (339 aa). Residues 569–842 enclose the Protein kinase domain; it reads NNFERVLGQG…QVVAELKESL (274 aa). ATP is bound by residues 575-583 and K596; that span reads LGQGGFGKV. At Y641 the chain carries Phosphotyrosine. The Proton acceptor role is filled by D692. S726 is modified (phosphoserine). T727 and T732 each carry phosphothreonine.

It belongs to the protein kinase superfamily. Ser/Thr protein kinase family.

The protein localises to the cell membrane. It carries out the reaction L-seryl-[protein] + ATP = O-phospho-L-seryl-[protein] + ADP + H(+). The catalysed reaction is L-threonyl-[protein] + ATP = O-phospho-L-threonyl-[protein] + ADP + H(+). The polypeptide is Putative leucine-rich repeat receptor-like serine/threonine-protein kinase At2g19230 (Arabidopsis thaliana (Mouse-ear cress)).